The chain runs to 359 residues: Nicotinate-nucleotide--dimethylbenzimidazole phosphoribosyltransferase (359 aa).

Glutamate 318 serves as the catalytic Proton acceptor.

This sequence belongs to the CobT family. Homodimer.

It carries out the reaction 5,6-dimethylbenzimidazole + nicotinate beta-D-ribonucleotide = alpha-ribazole 5'-phosphate + nicotinate + H(+). It functions in the pathway nucleoside biosynthesis; alpha-ribazole biosynthesis; alpha-ribazole from 5,6-dimethylbenzimidazole: step 1/2. Catalyzes the synthesis of alpha-ribazole-5'-phosphate from nicotinate mononucleotide (NAMN) and 5,6-dimethylbenzimidazole (DMB). The sequence is that of Nicotinate-nucleotide--dimethylbenzimidazole phosphoribosyltransferase from Shigella flexneri serotype 5b (strain 8401).